The following is a 296-amino-acid chain: Pantothenate synthetase (296 aa).

37 to 44 (MGALHTGH) lines the ATP pocket. His-44 acts as the Proton donor in catalysis. Gln-68 contacts (R)-pantoate. Residue Gln-68 coordinates beta-alanine. 160–163 (GQKD) serves as a coordination point for ATP. Position 166 (Gln-166) interacts with (R)-pantoate. ATP is bound by residues Val-189 and 197–200 (TSSR).

It belongs to the pantothenate synthetase family. In terms of assembly, homodimer.

Its subcellular location is the cytoplasm. It carries out the reaction (R)-pantoate + beta-alanine + ATP = (R)-pantothenate + AMP + diphosphate + H(+). It functions in the pathway cofactor biosynthesis; (R)-pantothenate biosynthesis; (R)-pantothenate from (R)-pantoate and beta-alanine: step 1/1. Its function is as follows. Catalyzes the condensation of pantoate with beta-alanine in an ATP-dependent reaction via a pantoyl-adenylate intermediate. This Thermobifida fusca (strain YX) protein is Pantothenate synthetase.